Consider the following 213-residue polypeptide: MAEVKIPQATAKRLPIYYRYLRLLSNSGKNRVSSTELAEAVKVDSATIRRDFSYFGALGKRGYGYDVQSLLDFFTKQLNQDTLTNVALVGVGNLGHALLNFNFHQSNHVRISAAFDVNEDITGTIQSGIPVYPMSDMKEQLKLQQIEIVILTVPAPVAQKVTDELVEVGVRGILNFTPLRITVPENIRVQNVDLTNEMETLIYFLNHFGSTEE.

Positions Ile-16–Phe-55 form a DNA-binding region, H-T-H motif. Position 90 to 95 (Gly-90 to Gly-95) interacts with NAD(+).

The protein belongs to the transcriptional regulatory Rex family. As to quaternary structure, homodimer.

The protein localises to the cytoplasm. Modulates transcription in response to changes in cellular NADH/NAD(+) redox state. This Ligilactobacillus salivarius (strain UCC118) (Lactobacillus salivarius) protein is Redox-sensing transcriptional repressor Rex.